The primary structure comprises 82 residues: Diphthamide biosynthesis protein 3 (82 aa).

The 57-residue stretch at 8–64 (IYDEVEIEDMTYDPALQTYSYPCPCGDKFEIALADLQDGQDIAVCPSCSLMVRVIFE) folds into the DPH-type MB domain. The Fe cation site is built by Cys-30, Cys-32, Cys-52, and Cys-55.

This sequence belongs to the DPH3 family. As to quaternary structure, component of the 2-(3-amino-3-carboxypropyl)histidine synthase complex composed of dph-1, dph-2, dph-3 and a NADH-dependent reductase, predominantly cbr-1. Requires Fe(2+) as cofactor.

The protein resides in the cytoplasm. The protein localises to the nucleus. The catalysed reaction is [3Fe-4S](1+)-[protein] + Fe(2+)-[Dph3] = [3Fe-4S](0)-[protein] + Fe(3+)-[Dph3]. It carries out the reaction 2 [3Fe-4S](0)-[protein] + 2 Fe(2+)-[Dph3] + NADH = 2 [4Fe-4S](1+)-[protein] + 2 [Dph3] + NAD(+) + H(+). It functions in the pathway protein modification; peptidyl-diphthamide biosynthesis. Its function is as follows. Required for the first step of diphthamide biosynthesis, a post-translational modification of histidine which occurs in elongation factor 2. Dph-1 and dph-2 transfer a 3-amino-3-carboxypropyl (ACP) group from S-adenosyl-L-methionine (SAM) to a histidine residue, the reaction is assisted by a reduction system comprising dph-3 and a NADH-dependent reductase, predominantly cbr-1. Acts as an electron donor to reduce the Fe-S cluster in dph1-dph2 keeping the [4Fe-4S] clusters in the active and reduced state. Restores iron to dph-1-dph-2 iron-sulfur clusters which have degraded from [4Fe-4S] to [3Fe-4S] by donating an iron atom to reform [4Fe-4S] clusters, in a manner dependent on the presence of elongation factor 2 and SAM. Associates with the elongator complex and is required for tRNA Wobble base modifications mediated by the elongator complex. The elongator complex is required for multiple tRNA modifications, including mcm5U (5-methoxycarbonylmethyl uridine), mcm5s 2U (5-methoxycarbonylmethyl-2-thiouridine), and ncm5U (5-carbamoylmethyl uridine). The chain is Diphthamide biosynthesis protein 3 (dph-3) from Neurospora crassa (strain ATCC 24698 / 74-OR23-1A / CBS 708.71 / DSM 1257 / FGSC 987).